The following is a 763-amino-acid chain: Protein CHROMATIN REMODELING 19 (763 aa).

2 disordered regions span residues 1 to 43 and 114 to 149; these read MKRD…TPSI and EDEEASDDDDDEAESSASEDEFGGGGGGSGGRRGED. Basic residues predominate over residues 23–34; the sequence is VLKRPRTPKKTR. The span at 114-135 shows a compositional bias: acidic residues; that stretch reads EDEEASDDDDDEAESSASEDEF. The Helicase ATP-binding domain maps to 226-404; sequence LLYKKGIEGA…WSLLEFMLPD (179 aa). Residue 239–246 participates in ATP binding; the sequence is DEMGLGKT. Residues 353–356 carry the DEAH box motif; it reads DEAH. The stretch at 462–482 forms a coiled coil; the sequence is RKQEDAYKEAIEEYRAASQAR. Positions 520–527 match the Nuclear localization signal motif; sequence IRRIYSDE. The 151-residue stretch at 592-742 folds into the Helicase C-terminal domain; the sequence is TLAELLPSMK…AAVLESGVHV (151 aa).

Belongs to the SNF2/RAD54 helicase family. Interacts with SUVR2 and itself.

It is found in the nucleus. DNA helicase that possesses intrinsic ATP-dependent nucleosome-remodeling activity and is both required for DNA repair and heterochromatin organization. Promotes DNA end resection of double-strand breaks (DSBs) following DNA damage: probably acts by weakening histone DNA interactions in nucleosomes flanking DSBs. Probable chromatin remodeling factor. Probable helicase-like transcription factor involved in transcriptional gene silencing. Associates with SUVR2 and contributes to transcriptional gene silencing at RNA-directed DNA methylation (RdDM) target loci but also at RdDM-independent target loci. May be involved in nucleosome positioning to form ordered nucleosome arrays on chromatin. The chain is Protein CHROMATIN REMODELING 19 from Arabidopsis thaliana (Mouse-ear cress).